A 67-amino-acid chain; its full sequence is Moricin (67 aa).

An N-terminal signal peptide occupies residues 1–23 (MKLTSLFIFVIVALSLLFSSTDA).

The protein belongs to the moricin family. In terms of assembly, monomer.

It is found in the secreted. Antimicrobial peptide. Active against a broad spectrum of Gram-positive and Gram-negative bacteria including methicillin-resistant S.aureus ATCC 43 300, S.aureus BAA-39, pathogenic strains of L.monocytogenes, K.pneumoniae, E.coli O157:H7, S.typhimurium and multidrug-resistant S.typhimurium DT104 with minimum inhibitory concentration (MIC) of 1.4 uM for all except for S.aureus BAA-39. Also active against Serratia marcescens. Probably acts by disturbing membrane functions with its amphipathic alpha-helical structure. May protect a developing embryo from bacterial infection. The chain is Moricin from Manduca sexta (Tobacco hawkmoth).